The following is a 399-amino-acid chain: Probable aspartate/prephenate aminotransferase (399 aa).

3 residues coordinate L-aspartate: Gly-39, Trp-125, and Asn-175. Residue Lys-239 is modified to N6-(pyridoxal phosphate)lysine. An L-aspartate-binding site is contributed by Arg-375.

It belongs to the class-I pyridoxal-phosphate-dependent aminotransferase family. As to quaternary structure, homodimer. Pyridoxal 5'-phosphate serves as cofactor.

The protein resides in the cytoplasm. It catalyses the reaction L-aspartate + 2-oxoglutarate = oxaloacetate + L-glutamate. It carries out the reaction L-arogenate + 2-oxoglutarate = prephenate + L-glutamate. In terms of biological role, catalyzes the reversible conversion of aspartate and 2-oxoglutarate to glutamate and oxaloacetate. Can also transaminate prephenate in the presence of glutamate. This Rickettsia typhi (strain ATCC VR-144 / Wilmington) protein is Probable aspartate/prephenate aminotransferase (aatA).